We begin with the raw amino-acid sequence, 97 residues long: RNA-binding protein YhbY (97 aa).

The 97-residue stretch at 1–97 (MNLSTKQKQH…TKERKISLPR (97 aa)) folds into the CRM domain.

The sequence is that of RNA-binding protein YhbY (yhbY) from Escherichia coli O157:H7.